We begin with the raw amino-acid sequence, 338 residues long: Holliday junction branch migration complex subunit RuvB (338 aa).

Positions 4–184 (ADRLMSAAAV…FGIVQRLEFY (181 aa)) are large ATPase domain (RuvB-L). Residues I23, R24, G65, K68, T69, T70, 131-133 (EDY), R174, Y184, and R221 each bind ATP. Mg(2+) is bound at residue T69. Residues 185–255 (QTGDLQHIVS…VAVSALNMLN (71 aa)) form a small ATPAse domain (RuvB-S) region. The segment at 258 to 338 (TEGFDFMDRK…GLEEHGGDPE (81 aa)) is head domain (RuvB-H). DNA is bound by residues R294, R313, and R318.

Belongs to the RuvB family. Homohexamer. Forms an RuvA(8)-RuvB(12)-Holliday junction (HJ) complex. HJ DNA is sandwiched between 2 RuvA tetramers; dsDNA enters through RuvA and exits via RuvB. An RuvB hexamer assembles on each DNA strand where it exits the tetramer. Each RuvB hexamer is contacted by two RuvA subunits (via domain III) on 2 adjacent RuvB subunits; this complex drives branch migration. In the full resolvosome a probable DNA-RuvA(4)-RuvB(12)-RuvC(2) complex forms which resolves the HJ.

The protein resides in the cytoplasm. The catalysed reaction is ATP + H2O = ADP + phosphate + H(+). The RuvA-RuvB-RuvC complex processes Holliday junction (HJ) DNA during genetic recombination and DNA repair, while the RuvA-RuvB complex plays an important role in the rescue of blocked DNA replication forks via replication fork reversal (RFR). RuvA specifically binds to HJ cruciform DNA, conferring on it an open structure. The RuvB hexamer acts as an ATP-dependent pump, pulling dsDNA into and through the RuvAB complex. RuvB forms 2 homohexamers on either side of HJ DNA bound by 1 or 2 RuvA tetramers; 4 subunits per hexamer contact DNA at a time. Coordinated motions by a converter formed by DNA-disengaged RuvB subunits stimulates ATP hydrolysis and nucleotide exchange. Immobilization of the converter enables RuvB to convert the ATP-contained energy into a lever motion, pulling 2 nucleotides of DNA out of the RuvA tetramer per ATP hydrolyzed, thus driving DNA branch migration. The RuvB motors rotate together with the DNA substrate, which together with the progressing nucleotide cycle form the mechanistic basis for DNA recombination by continuous HJ branch migration. Branch migration allows RuvC to scan DNA until it finds its consensus sequence, where it cleaves and resolves cruciform DNA. The sequence is that of Holliday junction branch migration complex subunit RuvB from Sodalis glossinidius (strain morsitans).